A 156-amino-acid polypeptide reads, in one-letter code: Small ribosomal subunit protein uS7 (156 aa).

This sequence belongs to the universal ribosomal protein uS7 family. In terms of assembly, part of the 30S ribosomal subunit. Contacts proteins S9 and S11.

One of the primary rRNA binding proteins, it binds directly to 16S rRNA where it nucleates assembly of the head domain of the 30S subunit. Is located at the subunit interface close to the decoding center, probably blocks exit of the E-site tRNA. The chain is Small ribosomal subunit protein uS7 from Aliivibrio salmonicida (strain LFI1238) (Vibrio salmonicida (strain LFI1238)).